The following is an 874-amino-acid chain: Protein Son (874 aa).

Disordered regions lie at residues 1–45, 68–98, and 120–368; these read MTEN…ERPD, RRSN…NIKP, and ELLD…SRDL. Residues 12-24 are compositionally biased toward polar residues; that stretch reads ETPQVAGSQTNPP. A compositionally biased stretch (low complexity) spans 70 to 89; it reads SNSNELGNNDESGESESSAS. Basic residues-rich tracts occupy residues 128-147 and 162-175; these read KKKK…KKKT and KHKH…HKDI. Basic and acidic residues-rich tracts occupy residues 176-219 and 226-277; these read RVKD…KDKF and SEKE…ERVR. Residues 705–751 enclose the G-patch domain; sequence TGGMGMALLQKMGWKPGEGLGRCKTGSLQPLLLDVKLDKRGLVSRDD. One can recognise a DRBM domain in the interval 800–870; the sequence is HPVCVLNELT…AALCLRSLGI (71 aa).

Expressed in ovarian nurse cells (at protein level).

Its subcellular location is the nucleus. Functionally, RNA-binding protein that protects nascent transcripts containing intronic transposable sequences, known as INE-1, from being degraded by DIP1. Modulates DIP1 activity by repressing its sumoylation levels. This ensures that intronic sequences will be degradated only after splicing. In the ovaries, regulates germline stem cells (GSCs) self-renewal by repressing the expression of the GSC differentiation-promoting factor Rga. This Drosophila melanogaster (Fruit fly) protein is Protein Son.